The sequence spans 638 residues: Cell division control protein 45 homolog (638 aa).

The interval 151 to 204 (ELSDEENSDSSNEREEEVEDDNRSVESYSSSDYQARSRRRFSEETTQRRAEIKE) is disordered. Acidic residues predominate over residues 153-170 (SDEENSDSSNEREEEVED). Residues 190 to 204 (RFSEETTQRRAEIKE) are compositionally biased toward basic and acidic residues.

Belongs to the CDC45 family. Interacts with sld3.

Its subcellular location is the nucleus. Its function is as follows. Required for initiation of chromosomal DNA replication. May have a role in regulating the MCM proteins nda1 and nda4. The chain is Cell division control protein 45 homolog (sna41) from Schizosaccharomyces pombe (strain 972 / ATCC 24843) (Fission yeast).